The sequence spans 428 residues: Histidinol dehydrogenase (428 aa).

Tyr-129, Gln-188, and Asn-211 together coordinate NAD(+). Ser-234, Gln-256, and His-259 together coordinate substrate. Zn(2+) contacts are provided by Gln-256 and His-259. Active-site proton acceptor residues include Glu-323 and His-324. The substrate site is built by His-324, Asp-357, Glu-411, and His-416. Asp-357 lines the Zn(2+) pocket. A Zn(2+)-binding site is contributed by His-416.

Belongs to the histidinol dehydrogenase family. It depends on Zn(2+) as a cofactor.

It catalyses the reaction L-histidinol + 2 NAD(+) + H2O = L-histidine + 2 NADH + 3 H(+). Its pathway is amino-acid biosynthesis; L-histidine biosynthesis; L-histidine from 5-phospho-alpha-D-ribose 1-diphosphate: step 9/9. Catalyzes the sequential NAD-dependent oxidations of L-histidinol to L-histidinaldehyde and then to L-histidine. This Caulobacter vibrioides (strain ATCC 19089 / CIP 103742 / CB 15) (Caulobacter crescentus) protein is Histidinol dehydrogenase.